The following is a 317-amino-acid chain: Ribosome production factor 2 homolog (317 aa).

The Brix domain occupies 28-240 (KTAIFLRGNA…IRRVQPAESD (213 aa)). The interval 287–317 (MKGLKRSVEEREDSENEEVEIEEDVISDASE) is disordered. A phosphoserine mark is found at Ser293, Ser300, Ser313, and Ser316. Over residues 296–317 (EREDSENEEVEIEEDVISDASE) the composition is skewed to acidic residues.

It belongs to the RPF2 family. Component of a hexameric 5S RNP precursor complex, composed of 5S RNA, rrs1, rpf2, rpl5a/rpl5b, rpl11a/rpl11b and syo1; this complex acts as a precursor for ribosome assembly.

The protein resides in the nucleus. Its subcellular location is the nucleolus. This Schizosaccharomyces pombe (strain 972 / ATCC 24843) (Fission yeast) protein is Ribosome production factor 2 homolog.